Reading from the N-terminus, the 632-residue chain is 2-oxoacid:ferredoxin oxidoreductase subunit alpha (632 aa).

Residues 253–257 (YPITP) carry the YPITP motif motif. Positions 256 and 344 each coordinate substrate.

Heterodimer composed of an alpha and a beta subunit.

Its subcellular location is the cytoplasm. The catalysed reaction is a 2-oxocarboxylate + 2 oxidized [2Fe-2S]-[ferredoxin] + CoA = an acyl-CoA + 2 reduced [2Fe-2S]-[ferredoxin] + CO2 + H(+). Its function is as follows. Catalyzes the coenzyme A-dependent oxidative decarboxylation of different 2-oxoacids such as 2-oxoglutarate, pyruvate and 2-oxobutyrate to form their CoA derivatives. The sequence is that of 2-oxoacid:ferredoxin oxidoreductase subunit alpha from Sulfolobus sp.